A 356-amino-acid polypeptide reads, in one-letter code: Phosphatidylglycerol--prolipoprotein diacylglyceryl transferase (356 aa).

The next 4 membrane-spanning stretches (helical) occupy residues 24–44 (IKWY…LACV), 59–79 (WFVF…SFII), 103–123 (LAIE…FPLV), and 144–164 (VSMW…QIIG). Arg-165 contacts a 1,2-diacyl-sn-glycero-3-phospho-(1'-sn-glycerol). Helical transmembrane passes span 209-229 (PFFL…YIGG) and 265-285 (FATS…LLVC).

It belongs to the Lgt family.

It localises to the cell membrane. The catalysed reaction is L-cysteinyl-[prolipoprotein] + a 1,2-diacyl-sn-glycero-3-phospho-(1'-sn-glycerol) = an S-1,2-diacyl-sn-glyceryl-L-cysteinyl-[prolipoprotein] + sn-glycerol 1-phosphate + H(+). Its pathway is protein modification; lipoprotein biosynthesis (diacylglyceryl transfer). Its function is as follows. Catalyzes the transfer of the diacylglyceryl group from phosphatidylglycerol to the sulfhydryl group of the N-terminal cysteine of a prolipoprotein, the first step in the formation of mature lipoproteins. This chain is Phosphatidylglycerol--prolipoprotein diacylglyceryl transferase, found in Malacoplasma penetrans (strain HF-2) (Mycoplasma penetrans).